Here is a 256-residue protein sequence, read N- to C-terminus: 14-3-3-like protein GF14-C (256 aa).

Belongs to the 14-3-3 family. May form a complex with the transcriptional activator VP1 and the bZIP transcription factor EMBP1. Expressed in seedlings, internodes and panicles.

It is found in the cytoplasm. Its subcellular location is the nucleus. Its function is as follows. Is associated with a DNA binding complex that binds to the G box, a well-characterized cis-acting DNA regulatory element found in plant genes. This Oryza sativa subsp. japonica (Rice) protein is 14-3-3-like protein GF14-C (GF14C).